The sequence spans 382 residues: 4-hydroxy-3-methylbut-2-en-1-yl diphosphate synthase (flavodoxin) (382 aa).

[4Fe-4S] cluster contacts are provided by C273, C276, C308, and E315.

Belongs to the IspG family. Requires [4Fe-4S] cluster as cofactor.

It catalyses the reaction (2E)-4-hydroxy-3-methylbut-2-enyl diphosphate + oxidized [flavodoxin] + H2O + 2 H(+) = 2-C-methyl-D-erythritol 2,4-cyclic diphosphate + reduced [flavodoxin]. It participates in isoprenoid biosynthesis; isopentenyl diphosphate biosynthesis via DXP pathway; isopentenyl diphosphate from 1-deoxy-D-xylulose 5-phosphate: step 5/6. Functionally, converts 2C-methyl-D-erythritol 2,4-cyclodiphosphate (ME-2,4cPP) into 1-hydroxy-2-methyl-2-(E)-butenyl 4-diphosphate. In Gluconacetobacter diazotrophicus (strain ATCC 49037 / DSM 5601 / CCUG 37298 / CIP 103539 / LMG 7603 / PAl5), this protein is 4-hydroxy-3-methylbut-2-en-1-yl diphosphate synthase (flavodoxin).